Consider the following 431-residue polypeptide: Tryptophan--tRNA ligase (431 aa).

Residues 12–14 and 20–21 contribute to the ATP site; these read TPS and GN. The short motif at 13 to 21 is the 'HIGH' region element; the sequence is PSGTPHLGN. Asp145 lines the L-tryptophan pocket. Residues 157 to 159, Leu197, and 204 to 208 each bind ATP; these read GRD and KMSKS. Positions 204 to 208 match the 'KMSKS' region motif; sequence KMSKS.

Belongs to the class-I aminoacyl-tRNA synthetase family. As to quaternary structure, homodimer.

The protein resides in the cytoplasm. The enzyme catalyses tRNA(Trp) + L-tryptophan + ATP = L-tryptophyl-tRNA(Trp) + AMP + diphosphate + H(+). Catalyzes the attachment of tryptophan to tRNA(Trp). In Xanthomonas campestris pv. campestris (strain ATCC 33913 / DSM 3586 / NCPPB 528 / LMG 568 / P 25), this protein is Tryptophan--tRNA ligase.